The sequence spans 317 residues: Transaldolase (317 aa).

Lys-132 acts as the Schiff-base intermediate with substrate in catalysis.

Belongs to the transaldolase family. Type 1 subfamily. In terms of assembly, homodimer.

The protein resides in the cytoplasm. It carries out the reaction D-sedoheptulose 7-phosphate + D-glyceraldehyde 3-phosphate = D-erythrose 4-phosphate + beta-D-fructose 6-phosphate. The protein operates within carbohydrate degradation; pentose phosphate pathway; D-glyceraldehyde 3-phosphate and beta-D-fructose 6-phosphate from D-ribose 5-phosphate and D-xylulose 5-phosphate (non-oxidative stage): step 2/3. In terms of biological role, transaldolase is important for the balance of metabolites in the pentose-phosphate pathway. The protein is Transaldolase of Yersinia pseudotuberculosis serotype IB (strain PB1/+).